Reading from the N-terminus, the 261-residue chain is Esterase citA (261 aa).

Active-site charge relay system residues include Ser-122, Asp-207, and His-235.

Belongs to the LovG family.

Its pathway is mycotoxin biosynthesis. Its function is as follows. Non-reducing polyketide synthase; part of the gene cluster that mediates the biosynthesis of the mycotoxin citrinin, a hepato-nephrotoxic compound to humans due to inhibition of respiration complex III. The pathway begins with the synthesis of a keto-aldehyde intermediate by the citrinin PKS (pksCT also named citS) from successive condensations of 4 malonyl-CoA units, presumably with a simple acetyl-CoA starter unit. Release of the keto-aldehyde intermediate is consistent with the presence of the C-terminal reductive release domain. CitA collaborates with citS by catalyzing the hydrolysis of ACP-bound acyl intermediates to free the ACP from stalled intermediates. CitB then catalyzes the oxidation of the C-12 methyl of the ketone intermediate to an alcohol intermediate which is further oxidized by the oxidoreductase citC to produce a bisaldehyde intermediate. The fourth catalytic step is catalyzed by the citD aldehyde dehydrogenase. The final transformation is the reduction of C-3 by citE to provide the chemically stable citrinin nucleus. CitE appears highly selective for its substrate as its presence in any context other than a full complement of citS and citA-D does not result in observable new compounds. The polypeptide is Esterase citA (Monascus ruber (Mold)).